Reading from the N-terminus, the 149-residue chain is Succinate dehydrogenase assembly factor 2, mitochondrial (149 aa).

Belongs to the SDHAF2 family. As to quaternary structure, interacts with the flavoprotein subunit within the SDH catalytic dimer.

Its subcellular location is the mitochondrion matrix. In terms of biological role, plays an essential role in the assembly of succinate dehydrogenase (SDH), an enzyme complex (also referred to as respiratory complex II) that is a component of both the tricarboxylic acid (TCA) cycle and the mitochondrial electron transport chain, and which couples the oxidation of succinate to fumarate with the reduction of ubiquinone (coenzyme Q) to ubiquinol. Required for flavinylation (covalent attachment of FAD) of the flavoprotein subunit of the SDH catalytic dimer. In Scheffersomyces stipitis (strain ATCC 58785 / CBS 6054 / NBRC 10063 / NRRL Y-11545) (Yeast), this protein is Succinate dehydrogenase assembly factor 2, mitochondrial.